The chain runs to 68 residues: Copper transport protein ATOX1 (68 aa).

The HMA domain occupies 1–63; the sequence is MPKHEFSVDM…TLNKTGKAVS (63 aa). Cys-12 and Cys-15 together coordinate Cu cation. Ser-47 is subject to Phosphoserine. N6-acetyllysine is present on Lys-60.

It belongs to the ATX1 family. In terms of assembly, homodimer. Interacts with ATP7B. Interacts with ATP7A. Interacts (via dimer form) with SLC31A1 (via C-terminal domain); this interaction improves ATOX1 stability and controls intracellular Cu(I) levels.

Its function is as follows. Binds and deliver cytosolic copper to the copper ATPase proteins. May be important in cellular antioxidant defense. This is Copper transport protein ATOX1 from Mus musculus (Mouse).